The primary structure comprises 1412 residues: DNA-directed RNA polymerase subunit beta' (1412 aa).

Residues C70, C72, C85, and C88 each contribute to the Zn(2+) site. Positions 460, 462, and 464 each coordinate Mg(2+). C819, C893, C900, and C903 together coordinate Zn(2+). The tract at residues 1393–1412 (EAFEFGTPSAPAEEPQHPAE) is disordered.

Belongs to the RNA polymerase beta' chain family. The RNAP catalytic core consists of 2 alpha, 1 beta, 1 beta' and 1 omega subunit. When a sigma factor is associated with the core the holoenzyme is formed, which can initiate transcription. Requires Mg(2+) as cofactor. It depends on Zn(2+) as a cofactor.

It carries out the reaction RNA(n) + a ribonucleoside 5'-triphosphate = RNA(n+1) + diphosphate. Its function is as follows. DNA-dependent RNA polymerase catalyzes the transcription of DNA into RNA using the four ribonucleoside triphosphates as substrates. The polypeptide is DNA-directed RNA polymerase subunit beta' (Burkholderia pseudomallei (strain 1106a)).